A 395-amino-acid polypeptide reads, in one-letter code: MVMGTPSSLDEIRKAQRADGPAGILAIGTANPANHVIQAEYPDYYFRITNSEHMTDLKEKFKRMCDKSTIRKRHMHLTEEFLKDNPNMCAYMAPSLDARQDIVVVEVPKLGKEAAVKAIKEWGQPKSKITHVVFCTTSGVDMPGADYQLTKLLGLRPSVKRLMMYQQGCFAGGTVLRLAKDLAENNRGARVLVVCSEITAVTFRGPSDTHLDSLVGQALFSDGAAALIVGSDADISAGEKPIFEMVSAAQTILPDSDGAIDGHLREVGLTFHLLKDVPGLISKNIEKSLDEAFKPLGISDWNSLFWIAHPGGPAILDDVEKKLGLKAEKMRATRHVLSEYGNMSSACVLFILDEMRRKSVEDGVATTGEGLEWGVLFGFGPGLTVETVVLHSVPV.

N-acetylvaline is present on Val2. Residue Cys169 is part of the active site.

Belongs to the thiolase-like superfamily. Chalcone/stilbene synthases family.

It carries out the reaction (E)-4-coumaroyl-CoA + 3 malonyl-CoA + 3 H(+) = 2',4,4',6'-tetrahydroxychalcone + 3 CO2 + 4 CoA. It functions in the pathway secondary metabolite biosynthesis; flavonoid biosynthesis. The primary product of this enzyme is 4,2',4',6'-tetrahydroxychalcone (also termed naringenin-chalcone or chalcone) which can under specific conditions spontaneously isomerize into naringenin. This Sinapis alba (White mustard) protein is Chalcone synthase 1 (CHS1).